Reading from the N-terminus, the 422-residue chain is Ribosomal RNA small subunit methyltransferase B (422 aa).

Residues 254-260, D277, D303, and D322 contribute to the S-adenosyl-L-methionine site; that span reads CAAPGGK. C375 functions as the Nucleophile in the catalytic mechanism.

This sequence belongs to the class I-like SAM-binding methyltransferase superfamily. RsmB/NOP family.

The protein localises to the cytoplasm. It catalyses the reaction cytidine(967) in 16S rRNA + S-adenosyl-L-methionine = 5-methylcytidine(967) in 16S rRNA + S-adenosyl-L-homocysteine + H(+). Functionally, specifically methylates the cytosine at position 967 (m5C967) of 16S rRNA. The polypeptide is Ribosomal RNA small subunit methyltransferase B (Proteus mirabilis (strain HI4320)).